Here is a 1216-residue protein sequence, read N- to C-terminus: Regulator of telomere elongation helicase 1 (1216 aa).

The 289-residue stretch at 7-295 folds into the Helicase ATP-binding domain; sequence KGVTVDFPFQ…TKVAQQAELH (289 aa). 42-49 is an ATP binding site; it reads SPTGTGKT. Residues Cys-144, Cys-162, Cys-171, and Cys-206 each coordinate [4Fe-4S] cluster. The short motif at 150-166 is the Nuclear localization signal element; sequence KKQESNHMQVHLCRRKV. A DEAH box motif is present at residues 249 to 252; the sequence is DEAH. The Nuclear localization signal signature appears at 874-880; sequence QRGRRRK. 2 disordered regions span residues 978 to 1018 and 1140 to 1172; these read GCSS…ATRQ and GPGTQAPGPQEGGPAMPSDPVCEAPSPGPRKTQ. A PIP-box motif is present at residues 1172–1179; that stretch reads QSKISSFL.

This sequence belongs to the helicase family. RAD3/XPD subfamily. In terms of assembly, interacts with TERF1. Interacts (via PIP-box) with PCNA; the interaction is direct and essential for suppressing telomere fragility. Interacts with MMS19; the interaction mediates the association of RTEL1 with the cytosolic iron-sulfur protein assembly (CIA) complex. Highly expressed in adult testis, liver and ovary.

Its subcellular location is the nucleus. The enzyme catalyses ATP + H2O = ADP + phosphate + H(+). In terms of biological role, a probable ATP-dependent DNA helicase implicated in telomere-length regulation, DNA repair and the maintenance of genomic stability. Acts as an anti-recombinase to counteract toxic recombination and limit crossover during meiosis. Regulates meiotic recombination and crossover homeostasis by physically dissociating strand invasion events and thereby promotes noncrossover repair by meiotic synthesis dependent strand annealing (SDSA) as well as disassembly of D loop recombination intermediates. Also disassembles T loops and prevents telomere fragility by counteracting telomeric G4-DNA structures, which together ensure the dynamics and stability of the telomere. The polypeptide is Regulator of telomere elongation helicase 1 (Bos taurus (Bovine)).